A 478-amino-acid polypeptide reads, in one-letter code: Shikimate biosynthesis protein AroDE (478 aa).

The 3-dehydroquinate dehydratase stretch occupies residues 1 to 208 (MLCTIIRGPS…LNHHYFYNFT (208 aa)). Residues Ser21, 29 to 31 (EMR), and 55 to 57 (TWK) contribute to the 3-dehydroquinate site. His110 acts as the Proton donor/acceptor; for 3-dehydroquinate dehydratase activity in catalysis. The active-site Schiff-base intermediate with substrate; for 3-dehydroquinate dehydratase activity is the Lys133. 2 residues coordinate 3-dehydroquinate: Arg171 and Gln196. The interval 209–478 (NLSPQSQICA…VLASLFSIAA (270 aa)) is shikimate 5-dehydrogenase. 226–228 (SIG) is a shikimate binding site. The Proton acceptor; for shikimate dehydrogenase activity role is filled by Lys277. Shikimate-binding residues include Asn298 and Asp313. Residues 337 to 341 (GAGGA), 360 to 362 (NRT), and Gly435 contribute to the NADP(+) site. Gln442 contacts shikimate.

In the N-terminal section; belongs to the type-I 3-dehydroquinase family. The protein in the C-terminal section; belongs to the shikimate dehydrogenase family.

It carries out the reaction 3-dehydroquinate = 3-dehydroshikimate + H2O. The enzyme catalyses shikimate + NADP(+) = 3-dehydroshikimate + NADPH + H(+). The protein operates within metabolic intermediate biosynthesis; chorismate biosynthesis; chorismate from D-erythrose 4-phosphate and phosphoenolpyruvate: step 3/7. It participates in metabolic intermediate biosynthesis; chorismate biosynthesis; chorismate from D-erythrose 4-phosphate and phosphoenolpyruvate: step 4/7. In terms of biological role, bifunctional enzyme that catalyzes two sequential steps of the aromatic amino acids biosynthetic pathway. In the first reaction, the AroD domain catalyzes the cis-dehydration of 3-dehydroquinate (DHQ) and introduces the first double bond of the aromatic ring to yield 3-dehydroshikimate; in the second reaction, the AroE domain catalyzes the reversible NADPH linked reduction of 3-dehydroshikimate (DHSA) to yield shikimate (SA). The chain is Shikimate biosynthesis protein AroDE from Chlamydia muridarum (strain MoPn / Nigg).